Reading from the N-terminus, the 455-residue chain is Chromosomal replication initiator protein DnaA (455 aa).

Residues 1 to 75 (MDTNNNIEKE…EILSQNKVGM (75 aa)) form a domain I, interacts with DnaA modulators region. The segment at 75–106 (MHLAHSVDVRIEVAPKIQINAQANINYKAIKT) is domain II. The tract at residues 107–321 (SVKDSYTFEN…GAIIKISVNA (215 aa)) is domain III, AAA+ region. ATP is bound by residues Gly151, Gly153, Lys154, and Thr155. Residues 322–455 (NLMNAPIDLN…DKKTAFNSSE (134 aa)) form a domain IV, binds dsDNA region.

It belongs to the DnaA family. In terms of assembly, oligomerizes as a right-handed, spiral filament on DNA at oriC.

It is found in the cytoplasm. Functionally, plays an essential role in the initiation and regulation of chromosomal replication. ATP-DnaA binds to the origin of replication (oriC) to initiate formation of the DNA replication initiation complex once per cell cycle. Binds the DnaA box (a 9 base pair repeat at the origin) and separates the double-stranded (ds)DNA. Forms a right-handed helical filament on oriC DNA; dsDNA binds to the exterior of the filament while single-stranded (ss)DNA is stabiized in the filament's interior. The ATP-DnaA-oriC complex binds and stabilizes one strand of the AT-rich DNA unwinding element (DUE), permitting loading of DNA polymerase. After initiation quickly degrades to an ADP-DnaA complex that is not apt for DNA replication. Binds acidic phospholipids. This chain is Chromosomal replication initiator protein DnaA, found in Helicobacter pylori (strain P12).